The chain runs to 942 residues: E3 ubiquitin-protein ligase HACE1 (942 aa).

7 ANK repeats span residues 23–55, 64–93, 97–126, 130–159, 163–192, 196–226, and 228–253; these read LPDD…NSKF, VKRS…NPNY, SGCT…DVNI, EGLT…NVDV, MGQT…DINR, SGAT…YLPD, and NGIT…QYHP. The tract at residues 428–459 is disordered; the sequence is KGPDHQDATPTPSFAAAGTESRKELSTDTGDS. Positions 447-459 are enriched in basic and acidic residues; sequence ESRKELSTDTGDS. In terms of domain architecture, HECT spans 607 to 942; that stretch reads NCAKLKQGIA…HCGSYGYTMA (336 aa). Cys909 functions as the Glycyl thioester intermediate in the catalytic mechanism.

The protein resides in the golgi apparatus. The protein localises to the golgi stack membrane. It localises to the cytoplasm. It is found in the endoplasmic reticulum. The catalysed reaction is S-ubiquitinyl-[E2 ubiquitin-conjugating enzyme]-L-cysteine + [acceptor protein]-L-lysine = [E2 ubiquitin-conjugating enzyme]-L-cysteine + N(6)-ubiquitinyl-[acceptor protein]-L-lysine.. It functions in the pathway protein modification; protein ubiquitination. In terms of biological role, E3 ubiquitin-protein ligase involved in Golgi membrane fusion and regulation of small GTPases. Acts as a regulator of Golgi membrane dynamics during the cell cycle: recruited to Golgi membrane by Rab proteins and regulates postmitotic Golgi membrane fusion. Acts by mediating ubiquitination during mitotic Golgi disassembly, ubiquitination serving as a signal for Golgi reassembly later, after cell division. This Gallus gallus (Chicken) protein is E3 ubiquitin-protein ligase HACE1 (HACE1).